Reading from the N-terminus, the 350-residue chain is MPVLHNRISNDELKAKMLAESEPRTTISFYKYFTIASPQQTRDALYQVFTALDVFGRVYLAHEGINAQISVPQSKVETFRQQLYTFDPALDGVRLNIALEDDGKSFWVLRMKVRDRIVADGIDDPTFDASNVGDYLKAADVNAMLDDPDAVFIDMRNHYEYEVGHFENALEIPADTFREQLPKAVEMLREHADKKIVMYCTGGIRCEKASAWMKHNGFNKVWHIEGGIIEYARRAREQGLPVRFIGKNFVFDERMGERISDEVIAHCHQCGAPCDSHTNCKNDGCHLLFIQCPQCASKFNGCCSEQCCEELALPEEEQRRRRAGRENGNKIFNKSRGRLNSKLSIPDPAE.

The 95-residue stretch at 146 to 240 (DDPDAVFIDM…YARRAREQGL (95 aa)) folds into the Rhodanese domain. Cysteine 200 functions as the Cysteine persulfide intermediate in the catalytic mechanism. Positions 319 to 328 (RRRRAGRENG) are enriched in basic and acidic residues. The disordered stretch occupies residues 319 to 350 (RRRRAGRENGNKIFNKSRGRLNSKLSIPDPAE).

This sequence belongs to the TrhO family.

The catalysed reaction is uridine(34) in tRNA + AH2 + O2 = 5-hydroxyuridine(34) in tRNA + A + H2O. Its function is as follows. Catalyzes oxygen-dependent 5-hydroxyuridine (ho5U) modification at position 34 in tRNAs. This chain is tRNA uridine(34) hydroxylase, found in Salmonella heidelberg (strain SL476).